A 130-amino-acid polypeptide reads, in one-letter code: Translation initiation factor 5A (130 aa).

Residue lysine 36 is modified to Hypusine.

The protein belongs to the eIF-5A family.

The protein resides in the cytoplasm. In terms of biological role, functions by promoting the formation of the first peptide bond. This is Translation initiation factor 5A (eif5a) from Methanothermobacter thermautotrophicus (strain ATCC 29096 / DSM 1053 / JCM 10044 / NBRC 100330 / Delta H) (Methanobacterium thermoautotrophicum).